The sequence spans 857 residues: DNA mismatch repair protein MutS (857 aa).

Residue Gly621–Ser628 participates in ATP binding.

Belongs to the DNA mismatch repair MutS family.

In terms of biological role, this protein is involved in the repair of mismatches in DNA. It is possible that it carries out the mismatch recognition step. This protein has a weak ATPase activity. The chain is DNA mismatch repair protein MutS from Francisella tularensis subsp. tularensis (strain SCHU S4 / Schu 4).